A 342-amino-acid chain; its full sequence is S-adenosylmethionine:tRNA ribosyltransferase-isomerase (342 aa).

Belongs to the QueA family. In terms of assembly, monomer.

It localises to the cytoplasm. The enzyme catalyses 7-aminomethyl-7-carbaguanosine(34) in tRNA + S-adenosyl-L-methionine = epoxyqueuosine(34) in tRNA + adenine + L-methionine + 2 H(+). It participates in tRNA modification; tRNA-queuosine biosynthesis. Transfers and isomerizes the ribose moiety from AdoMet to the 7-aminomethyl group of 7-deazaguanine (preQ1-tRNA) to give epoxyqueuosine (oQ-tRNA). This chain is S-adenosylmethionine:tRNA ribosyltransferase-isomerase, found in Listeria monocytogenes serotype 4b (strain CLIP80459).